Reading from the N-terminus, the 310-residue chain is Tagatose-6-phosphate kinase (310 aa).

It belongs to the carbohydrate kinase PfkB family. LacC subfamily.

It catalyses the reaction D-tagatofuranose 6-phosphate + ATP = D-tagatofuranose 1,6-bisphosphate + ADP + H(+). It participates in carbohydrate metabolism; D-tagatose 6-phosphate degradation; D-glyceraldehyde 3-phosphate and glycerone phosphate from D-tagatose 6-phosphate: step 1/2. This is Tagatose-6-phosphate kinase from Staphylococcus aureus (strain MRSA252).